We begin with the raw amino-acid sequence, 268 residues long: tRNA threonylcarbamoyladenosine dehydratase (268 aa).

Residues 237 to 257 (GFGAATMVTATFGFVAVSHAL) form a helical membrane-spanning segment.

It belongs to the HesA/MoeB/ThiF family. Interacts with CsdE.

It is found in the membrane. Catalyzes the ATP-dependent dehydration of threonylcarbamoyladenosine at position 37 (t(6)A37) to form cyclic t(6)A37 (ct(6)A37) in tRNAs that read codons beginning with adenine. TcdA is also part of a sulfur transfer pathway; is able to accept sulfur from CsdA directly in vitro, but CsdE might act as the sulfur donor in vivo. The protein is tRNA threonylcarbamoyladenosine dehydratase (tcdA) of Escherichia coli (strain K12).